Here is a 317-residue protein sequence, read N- to C-terminus: Aspartate carbamoyltransferase catalytic subunit (317 aa).

R66 and T67 together coordinate carbamoyl phosphate. An L-aspartate-binding site is contributed by K94. Positions 116, 144, and 147 each coordinate carbamoyl phosphate. L-aspartate contacts are provided by R177 and R231. 2 residues coordinate carbamoyl phosphate: G272 and P273.

Belongs to the aspartate/ornithine carbamoyltransferase superfamily. ATCase family. In terms of assembly, heterododecamer (2C3:3R2) of six catalytic PyrB chains organized as two trimers (C3), and six regulatory PyrI chains organized as three dimers (R2).

The enzyme catalyses carbamoyl phosphate + L-aspartate = N-carbamoyl-L-aspartate + phosphate + H(+). It functions in the pathway pyrimidine metabolism; UMP biosynthesis via de novo pathway; (S)-dihydroorotate from bicarbonate: step 2/3. Functionally, catalyzes the condensation of carbamoyl phosphate and aspartate to form carbamoyl aspartate and inorganic phosphate, the committed step in the de novo pyrimidine nucleotide biosynthesis pathway. In Rhodopseudomonas palustris (strain HaA2), this protein is Aspartate carbamoyltransferase catalytic subunit.